We begin with the raw amino-acid sequence, 165 residues long: Protein SprT (165 aa).

The region spanning leucine 22–valine 163 is the SprT-like domain. Position 78 (histidine 78) interacts with Zn(2+). Glutamate 79 is an active-site residue. Zn(2+) is bound at residue histidine 82.

It belongs to the SprT family. Requires Zn(2+) as cofactor.

It localises to the cytoplasm. This chain is Protein SprT, found in Shigella dysenteriae serotype 1 (strain Sd197).